A 124-amino-acid polypeptide reads, in one-letter code: Probable 5-hydroxyisourate hydrolase (124 aa).

Substrate is bound by residues histidine 16, arginine 57, and tyrosine 121.

The protein belongs to the transthyretin family. 5-hydroxyisourate hydrolase subfamily. Homotetramer.

It catalyses the reaction 5-hydroxyisourate + H2O = 5-hydroxy-2-oxo-4-ureido-2,5-dihydro-1H-imidazole-5-carboxylate + H(+). Functionally, catalyzes the hydrolysis of 5-hydroxyisourate (HIU) to 2-oxo-4-hydroxy-4-carboxy-5-ureidoimidazoline (OHCU). The polypeptide is Probable 5-hydroxyisourate hydrolase (Schizosaccharomyces pombe (strain 972 / ATCC 24843) (Fission yeast)).